Here is a 48-residue protein sequence, read N- to C-terminus: Small, acid-soluble spore protein G (48 aa).

The span at 1-16 shows a compositional bias: basic and acidic residues; the sequence is MSENRHENEENRRDAA. Positions 1–48 are disordered; it reads MSENRHENEENRRDAAVAKVQNSGNAKVVVSVNTDQDQAQAQSQDGED. Residues 35 to 48 show a composition bias toward low complexity; sequence DQDQAQAQSQDGED.

The protein is Small, acid-soluble spore protein G (sspG) of Bacillus subtilis (strain 168).